Consider the following 57-residue polypeptide: Andropin (57 aa).

The signal sequence occupies residues 1-23 (MKYFVVLVVLALILAISVGPSDA).

Belongs to the andropin family. In terms of tissue distribution, ejaculatory duct of adult males.

It is found in the secreted. In terms of biological role, male-specific peptide with moderate activity against Gram-positive bacteria. This is Andropin (Anp) from Drosophila melanogaster (Fruit fly).